Consider the following 506-residue polypeptide: GTPase Der (506 aa).

EngA-type G domains follow at residues 3–166 (PVVA…GEQL) and 218–391 (IKIA…ACAT). Residues 9-16 (GRPNVGKS), 56-60 (DTGGI), 118-121 (NKTD), 224-231 (GRPNVGKS), 271-275 (DTAGV), and 336-339 (NKWD) each bind GTP. The KH-like domain maps to 392 to 476 (QKTSTSMLTR…PIRIQFQEGN (85 aa)).

This sequence belongs to the TRAFAC class TrmE-Era-EngA-EngB-Septin-like GTPase superfamily. EngA (Der) GTPase family. In terms of assembly, associates with the 50S ribosomal subunit.

Functionally, GTPase that plays an essential role in the late steps of ribosome biogenesis. This is GTPase Der from Actinobacillus pleuropneumoniae serotype 5b (strain L20).